Reading from the N-terminus, the 279-residue chain is MLMKIKTSIHPSSVVEEGAQIGEGVRIGPFCHISADAVIGDGVELVSHVSVMGATTIGASTKVYPMATLGAPPQNTKHKGGRTTLVIGANCTIREGVTMHVGTDTSRGETTVGDNGNFLAYAHIAHDCVVGKNATFANGATLGGHCEIGDNVYIGGLSAVHQFVRVGDNAFLGGCSAFVGDVIPYAIAVGNRASLRGLNIIGLKRAGLPRSEIYLLRKAYRTIFDRSRTVGENIEFAKAEFASSPTAMKIIDFISSRGKRHYAVPSLKGGDGDDTDDED.

It belongs to the transferase hexapeptide repeat family. LpxA subfamily. As to quaternary structure, homotrimer.

The protein localises to the cytoplasm. The enzyme catalyses a (3R)-hydroxyacyl-[ACP] + UDP-N-acetyl-alpha-D-glucosamine = a UDP-3-O-[(3R)-3-hydroxyacyl]-N-acetyl-alpha-D-glucosamine + holo-[ACP]. It participates in glycolipid biosynthesis; lipid IV(A) biosynthesis; lipid IV(A) from (3R)-3-hydroxytetradecanoyl-[acyl-carrier-protein] and UDP-N-acetyl-alpha-D-glucosamine: step 1/6. Functionally, involved in the biosynthesis of lipid A, a phosphorylated glycolipid that anchors the lipopolysaccharide to the outer membrane of the cell. The protein is Acyl-[acyl-carrier-protein]--UDP-N-acetylglucosamine O-acyltransferase of Mesorhizobium japonicum (strain LMG 29417 / CECT 9101 / MAFF 303099) (Mesorhizobium loti (strain MAFF 303099)).